We begin with the raw amino-acid sequence, 150 residues long: Deoxyuridine 5'-triphosphate nucleotidohydrolase (150 aa).

Substrate-binding positions include 69–71 (RSG), N82, 86–88 (LID), and K96.

Belongs to the dUTPase family. It depends on Mg(2+) as a cofactor.

The catalysed reaction is dUTP + H2O = dUMP + diphosphate + H(+). The protein operates within pyrimidine metabolism; dUMP biosynthesis; dUMP from dCTP (dUTP route): step 2/2. In terms of biological role, this enzyme is involved in nucleotide metabolism: it produces dUMP, the immediate precursor of thymidine nucleotides and it decreases the intracellular concentration of dUTP so that uracil cannot be incorporated into DNA. The protein is Deoxyuridine 5'-triphosphate nucleotidohydrolase of Neisseria gonorrhoeae (strain ATCC 700825 / FA 1090).